Reading from the N-terminus, the 634-residue chain is CRISPR-associated protein MJ1674 (634 aa).

Its function is as follows. CRISPR (clustered regularly interspaced short palindromic repeat) is an adaptive immune system that provides protection against mobile genetic elements (viruses, transposable elements and conjugative plasmids). CRISPR clusters contain spacers, sequences complementary to antecedent mobile elements, and target invading nucleic acids. CRISPR clusters are transcribed and processed into CRISPR RNA (crRNA). The type III Csm effector complex binds crRNA and acts as a crRNA-guided RNase, DNase and cyclic oligoadenylate synthase; binding of target RNA cognate to the crRNA is required for all activities. This Methanocaldococcus jannaschii (strain ATCC 43067 / DSM 2661 / JAL-1 / JCM 10045 / NBRC 100440) (Methanococcus jannaschii) protein is CRISPR-associated protein MJ1674.